The sequence spans 510 residues: GMP synthase [glutamine-hydrolyzing] (510 aa).

The Glutamine amidotransferase type-1 domain maps to 3–194; sequence QILILDFGSQ…ARVICGYKEK (192 aa). Cys-80 acts as the Nucleophile in catalysis. Residues His-168 and Glu-170 contribute to the active site. The GMPS ATP-PPase domain occupies 195-385; the sequence is WTPASIMTAS…LGLGSEIVDI (191 aa). 222 to 228 is an ATP binding site; the sequence is SGGVDSS.

In terms of assembly, homodimer.

The catalysed reaction is XMP + L-glutamine + ATP + H2O = GMP + L-glutamate + AMP + diphosphate + 2 H(+). It functions in the pathway purine metabolism; GMP biosynthesis; GMP from XMP (L-Gln route): step 1/1. In terms of biological role, catalyzes the synthesis of GMP from XMP. The chain is GMP synthase [glutamine-hydrolyzing] from Elusimicrobium minutum (strain Pei191).